The chain runs to 627 residues: Sister chromatid cohesion 1 protein 1 (627 aa).

3 disordered regions span residues 211-294 (GDDE…TATS), 395-416 (MHNH…NLDS), and 461-510 (GDDV…VAEE). 3 stretches are compositionally biased toward basic and acidic residues: residues 254–263 (EQQENRRDGF), 272–282 (IPDKEEHDRPQ), and 395–408 (MHNH…ERSD). Positions 467-487 (MPSTPSARGAASINNIEISSK) are enriched in polar residues.

This sequence belongs to the rad21 family. In terms of assembly, component of the cohesin complex. As to expression, isoform 2 is expressed at low levels in buds, leaves and roots, whereas expression of isoform 1 is confined to buds.

The protein resides in the nucleus. Its function is as follows. Involved in chromosome condensation, pairing and segregation during meiosis. Responsible for cohesion between replicated sister chromatids. In Arabidopsis thaliana (Mouse-ear cress), this protein is Sister chromatid cohesion 1 protein 1 (SYN1).